The sequence spans 131 residues: Small ribosomal subunit protein eS17 (131 aa).

The protein belongs to the eukaryotic ribosomal protein eS17 family.

The polypeptide is Small ribosomal subunit protein eS17 (RpS17) (Drosophila melanogaster (Fruit fly)).